Consider the following 512-residue polypeptide: Oxalate--CoA ligase (512 aa).

168-179 serves as a coordination point for ATP; the sequence is HTSGTTGRPKVV. Phosphoserine is present on residues serine 283 and serine 284. Positions 381 to 429 match the FACS motif; the sequence is DRFFRTGDEGKLDKDGYVFITGRIKELVNRGGEKISPAEIDAVLMQHPD. A Microbody targeting signal motif is present at residues 510-512; sequence AKL.

The protein belongs to the ATP-dependent AMP-binding enzyme family.

The protein localises to the peroxisome matrix. It is found in the peroxisome membrane. It catalyses the reaction oxalate + ATP + CoA = oxalyl-CoA + AMP + diphosphate. Catalyzes the first step in a degradation pathway of oxalate to CO(2) to protect the cell against the harmful effects of oxalate derived from endogenous processes or an environmental sources. The protein is Oxalate--CoA ligase (pcs60) of Schizosaccharomyces pombe (strain 972 / ATCC 24843) (Fission yeast).